Here is a 238-residue protein sequence, read N- to C-terminus: Expansin-like protein 5 (238 aa).

Positions 1 to 21 (MRINFKLILIILTSFYGIINC) are cleaved as a signal peptide. The Expansin-like EG45 domain maps to 45-145 (NGNCGFGKLT…VKVPCRVSGN (101 aa)). Cystine bridges form between cysteine 48/cysteine 78 and cysteine 81/cysteine 140. Residue asparagine 89 is glycosylated (N-linked (GlcNAc...) asparagine).

This sequence belongs to the expansin family. Expansin A subfamily.

The protein resides in the secreted. In terms of biological role, may serve to lubricate the movement of the cellulose microfibrils during cell growth and wall extension and/or may serve to maintain the fluid state of the slug cell wall. The polypeptide is Expansin-like protein 5 (expl5) (Dictyostelium discoideum (Social amoeba)).